The following is a 325-amino-acid chain: N-acetyl-gamma-glutamyl-phosphate reductase (325 aa).

The active site involves cysteine 131.

It belongs to the NAGSA dehydrogenase family. Type 1 subfamily.

The protein localises to the cytoplasm. It catalyses the reaction N-acetyl-L-glutamate 5-semialdehyde + phosphate + NADP(+) = N-acetyl-L-glutamyl 5-phosphate + NADPH + H(+). It participates in amino-acid biosynthesis; L-arginine biosynthesis; N(2)-acetyl-L-ornithine from L-glutamate: step 3/4. Catalyzes the NADPH-dependent reduction of N-acetyl-5-glutamyl phosphate to yield N-acetyl-L-glutamate 5-semialdehyde. In Methylobacterium sp. (strain 4-46), this protein is N-acetyl-gamma-glutamyl-phosphate reductase.